A 298-amino-acid polypeptide reads, in one-letter code: Protoheme IX farnesyltransferase (298 aa).

The next 8 membrane-spanning stretches (helical) occupy residues 24-44 (VVSL…PAWP), 46-66 (WTTI…AAAF), 97-117 (LVFA…VVNP), 118-138 (LTMW…TVLL), 146-166 (IVIG…AATG), 172-192 (ALLL…ALAL), 231-251 (LLPV…VLLG), and 278-298 (IWYL…PIPV).

Belongs to the UbiA prenyltransferase family. Protoheme IX farnesyltransferase subfamily.

Its subcellular location is the cell inner membrane. It carries out the reaction heme b + (2E,6E)-farnesyl diphosphate + H2O = Fe(II)-heme o + diphosphate. It functions in the pathway porphyrin-containing compound metabolism; heme O biosynthesis; heme O from protoheme: step 1/1. In terms of biological role, converts heme B (protoheme IX) to heme O by substitution of the vinyl group on carbon 2 of heme B porphyrin ring with a hydroxyethyl farnesyl side group. This is Protoheme IX farnesyltransferase from Thiobacillus denitrificans (strain ATCC 25259 / T1).